Reading from the N-terminus, the 153-residue chain is Nuclear cap-binding protein subunit 2 (153 aa).

Residues Tyr17, Tyr40, 109-113, 120-124, and 130-131 contribute to the mRNA site; these read RTDWD, RQYGR, and QV. In terms of domain architecture, RRM spans 37–115; sequence CTLYVGNLSF…RIIRTDWDAG (79 aa).

Belongs to the RRM NCBP2 family. In terms of assembly, component of the nuclear cap-binding complex (CBC), a heterodimer composed of ncbp1/cbp80 and ncbp2/cbp20 that interacts with m7GpppG-capped RNA.

Its subcellular location is the nucleus. It localises to the cytoplasm. Functionally, component of the cap-binding complex (CBC), which binds co-transcriptionally to the 5' cap of pre-mRNAs and is involved in various processes such as pre-mRNA splicing, translation regulation, nonsense-mediated mRNA decay, RNA-mediated gene silencing (RNAi) by microRNAs (miRNAs) and mRNA export. The CBC complex is involved in mRNA export from the nucleus, leading to the recruitment of the mRNA export machinery to the 5' end of mRNA and to mRNA export in a 5' to 3' direction through the nuclear pore. The CBC complex is also involved in mediating U snRNA and intronless mRNAs export from the nucleus. The CBC complex is essential for a pioneer round of mRNA translation, before steady state translation when the CBC complex is replaced by cytoplasmic cap-binding protein eIF4E. The pioneer round of mRNA translation mediated by the CBC complex plays a central role in nonsense-mediated mRNA decay (NMD), NMD only taking place in mRNAs bound to the CBC complex, but not on eIF4E-bound mRNAs. The CBC complex enhances NMD in mRNAs containing at least one exon-junction complex (EJC), promoting the interaction between upf1 and upf2. The CBC complex is also involved in 'failsafe' NMD, which is independent of the EJC complex, while it does not participate in Staufen-mediated mRNA decay (SMD). During cell proliferation, the CBC complex is also involved in microRNAs (miRNAs) biogenesis via its interaction with srrt/ars2, thereby being required for miRNA-mediated RNA interference. The CBC complex also acts as a negative regulator of parn, thereby acting as an inhibitor of mRNA deadenylation. In the CBC complex, ncbp2/cbp20 recognizes and binds capped RNAs (m7GpppG-capped RNA) but requires ncbp1/cbp80 to stabilize the movement of its N-terminal loop and lock the CBC into a high affinity cap-binding state with the cap structure. The conventional cap-binding complex with NCBP2 binds both small nuclear RNA (snRNA) and messenger (mRNA) and is involved in their export from the nucleus. This Xenopus tropicalis (Western clawed frog) protein is Nuclear cap-binding protein subunit 2 (ncbp2).